Reading from the N-terminus, the 319-residue chain is Acyl-coenzyme A thioesterase 8 (319 aa).

Residues 1 to 20 (MSSPQAPEDGQGCGDRGDPP) form a disordered region. Residues Asp232, Ser254, and Gln304 each act as charge relay system in the active site. A Microbody targeting signal motif is present at residues 317-319 (SKL).

This sequence belongs to the C/M/P thioester hydrolase family. In terms of assembly, homodimer. (Microbial infection) Interacts with human immunodeficiency virus (HIV-1) Nef (via middle region); this interaction enhances ACOT8 Acyl-CoA thioesterase activity and occurs in a Nef myristoylation-independent manner. According to a second report, the interaction with HIV-1 Nef occurs in a Nef myristoylation-independent manner but does not enhance ACOT8 Acyl-CoA thioesterase activity. In terms of tissue distribution, detected in a T-cell line (at protein level). Ubiquitous.

The protein resides in the peroxisome matrix. It catalyses the reaction choloyl-CoA + H2O = cholate + CoA + H(+). It carries out the reaction chenodeoxycholoyl-CoA + H2O = chenodeoxycholate + CoA + H(+). The enzyme catalyses acetyl-CoA + H2O = acetate + CoA + H(+). The catalysed reaction is butanoyl-CoA + H2O = butanoate + CoA + H(+). It catalyses the reaction 2-methylpropanoyl-CoA + H2O = 2-methylpropanoate + CoA + H(+). It carries out the reaction hexanoyl-CoA + H2O = hexanoate + CoA + H(+). The enzyme catalyses octanoyl-CoA + H2O = octanoate + CoA + H(+). The catalysed reaction is decanoyl-CoA + H2O = decanoate + CoA + H(+). It catalyses the reaction dodecanoyl-CoA + H2O = dodecanoate + CoA + H(+). It carries out the reaction tetradecanoyl-CoA + H2O = tetradecanoate + CoA + H(+). The enzyme catalyses hexadecanoyl-CoA + H2O = hexadecanoate + CoA + H(+). The catalysed reaction is octadecanoyl-CoA + H2O = octadecanoate + CoA + H(+). It catalyses the reaction malonyl-CoA + H2O = malonate + CoA + H(+). It carries out the reaction acetoacetyl-CoA + H2O = acetoacetate + CoA + H(+). The enzyme catalyses propanoyl-CoA + H2O = propanoate + CoA + H(+). The catalysed reaction is succinyl-CoA + H2O = succinate + CoA + H(+). It catalyses the reaction glutaryl-CoA + H2O = glutarate + CoA + H(+). It carries out the reaction hexanedioyl-CoA + H2O = hexanedioate + CoA + H(+). The enzyme catalyses octanedioyl-CoA + H2O = octanedioate + CoA + H(+). The catalysed reaction is decanedioyl-CoA + H2O = decanedioate + CoA + H(+). It catalyses the reaction dodecanedioyl-CoA + H2O = dodecanedioate + CoA + H(+). It carries out the reaction (9Z)-tetradecenoyl-CoA + H2O = (9Z)-tetradecenoate + CoA + H(+). The enzyme catalyses (9Z)-hexadecenoyl-CoA + H2O = (9Z)-hexadecenoate + CoA + H(+). The catalysed reaction is (9Z)-octadecenoyl-CoA + H2O = (9Z)-octadecenoate + CoA + H(+). It catalyses the reaction (9Z,12Z)-octadecadienoyl-CoA + H2O = (9Z,12Z)-octadecadienoate + CoA + H(+). It carries out the reaction eicosanoyl-CoA + H2O = eicosanoate + CoA + H(+). The enzyme catalyses (5Z,8Z,11Z,14Z)-eicosatetraenoyl-CoA + H2O = (5Z,8Z,11Z,14Z)-eicosatetraenoate + CoA + H(+). The catalysed reaction is 4,8-dimethylnonanoyl-CoA + H2O = 4,8-dimethylnonanoate + CoA + H(+). It catalyses the reaction 2,6-dimethylheptanoyl-CoA + H2O = 2,6-dimethylheptanoate + CoA + H(+). It carries out the reaction (3S)-3-hydroxy-3-methylglutaryl-CoA + H2O = 3-hydroxy-3-methylglutarate + CoA + H(+). The enzyme catalyses 3alpha,7alpha,12alpha-trihydroxy-5beta-cholestan-26-oyl-CoA + H2O = 3alpha,7alpha,12alpha-trihydroxy-5beta-cholestan-26-oate + CoA + H(+). The catalysed reaction is 2-methyloctadecanoyl-CoA + H2O = 2-methyloctadecanoate + CoA + H(+). It catalyses the reaction prostaglandin F2alpha-CoA + H2O = prostaglandin F2alpha + CoA + H(+). It functions in the pathway lipid metabolism; fatty acid metabolism. Its activity is regulated as follows. Inhibited by CoASH (IC(50)=10-15 uM). Also inhibited by cysteine-reactive agents. In terms of biological role, catalyzes the hydrolysis of acyl-CoAs into free fatty acids and coenzyme A (CoASH), regulating their respective intracellular levels. Displays no strong substrate specificity with respect to the carboxylic acid moiety of Acyl-CoAs. Hydrolyzes medium length (C2 to C20) straight-chain, saturated and unsaturated acyl-CoAS but is inactive towards substrates with longer aliphatic chains. Moreover, it catalyzes the hydrolysis of CoA esters of bile acids, such as choloyl-CoA and chenodeoxycholoyl-CoA and competes with bile acid CoA:amino acid N-acyltransferase (BAAT). Is also able to hydrolyze CoA esters of dicarboxylic acids. It is involved in the metabolic regulation of peroxisome proliferation. Its function is as follows. (Microbial infection) May mediate Nef-induced down-regulation of CD4 cell-surface expression. The chain is Acyl-coenzyme A thioesterase 8 (ACOT8) from Homo sapiens (Human).